Here is a 70-residue protein sequence, read N- to C-terminus: MGSCVSVKSISISMDTVSISSIDDEYYYNIKNKPIYVRRKNSCSSTLESRYSTYSLESRYSTYSIKSVYF.

This is an uncharacterized protein from Swinepox virus (strain Kasza) (SWPV).